We begin with the raw amino-acid sequence, 626 residues long: Alpha terpineol synthase, chloroplastic (626 aa).

A chloroplast-targeting transit peptide spans M1–V38. Positions 377, 381, and 529 each coordinate Mg(2+). The DDXXD motif motif lies at D377–D381.

It belongs to the terpene synthase family. Tpsd subfamily. Requires Mg(2+) as cofactor. It depends on Mn(2+) as a cofactor.

Its subcellular location is the plastid. The protein resides in the chloroplast. The catalysed reaction is (2E)-geranyl diphosphate + H2O = (S)-alpha-terpineol + diphosphate. It carries out the reaction (2E)-geranyl diphosphate + H2O = (R)-alpha-terpineol + diphosphate. The enzyme catalyses (2E)-geranyl diphosphate + H2O = (2E)-geraniol + diphosphate. It catalyses the reaction (2E)-geranyl diphosphate = terpinolene + diphosphate. The catalysed reaction is (2E)-geranyl diphosphate = (4S)-limonene + diphosphate. It participates in terpene metabolism; oleoresin biosynthesis. Its pathway is secondary metabolite biosynthesis; terpenoid biosynthesis. Its function is as follows. Monoterpene synthase (TPS) involved in the biosynthesis of monoterpene natural products included in conifer oleoresin secretions and volatile emissions; these compounds contribute to biotic and abiotic stress defense against herbivores and pathogens. Catalyzes the conversion of (2E)-geranyl diphosphate (GPP) to (-)-alpha-terpineol, (+)-alpha-terpineol and terpin-4-ol, and, to a lower extent, to geraniol, terpinolene and (-)-limonene. The protein is Alpha terpineol synthase, chloroplastic of Pinus banksiana (Jack pine).